We begin with the raw amino-acid sequence, 296 residues long: MKIAVYGKGGIGKSTTSCNISIALARRGKKVLQIGCDPKHDSTFTLTGFLIPTIIDTLQSKDYHYEDVWPEDVIYKGYGGVDCVEAGGPPAGAGCGGYVVGETVKLLKELNAFYEYDVILFDVLGDVVCGGFAAPLNYADYCIIITDNGFDALFAANRIAASVREKARTHPLRLAGLVGNRTSKRDLIDKYVEACPMPVLEVLPLIEDIRISRVKGKTLFEMAESEPSLDYVCEFYLNIADQLLARPEGVVPKEVPDRELFSLLSDFYLNPANNASSIEQPTDSIVQSEQEPFLII.

Residues 10–15 and Lys39 contribute to the ATP site; that span reads GIGKST. Ser14 is a Mg(2+) binding site. [4Fe-4S] cluster contacts are provided by Cys95 and Cys129. Position 180 to 181 (180 to 181) interacts with ATP; the sequence is NR.

Belongs to the NifH/BchL/ChlL family. In terms of assembly, homodimer. Protochlorophyllide reductase is composed of three subunits; ChlL, ChlN and ChlB. [4Fe-4S] cluster serves as cofactor.

Its subcellular location is the plastid. It localises to the chloroplast. It catalyses the reaction chlorophyllide a + oxidized 2[4Fe-4S]-[ferredoxin] + 2 ADP + 2 phosphate = protochlorophyllide a + reduced 2[4Fe-4S]-[ferredoxin] + 2 ATP + 2 H2O. It participates in porphyrin-containing compound metabolism; chlorophyll biosynthesis (light-independent). Functionally, component of the dark-operative protochlorophyllide reductase (DPOR) that uses Mg-ATP and reduced ferredoxin to reduce ring D of protochlorophyllide (Pchlide) to form chlorophyllide a (Chlide). This reaction is light-independent. The L component serves as a unique electron donor to the NB-component of the complex, and binds Mg-ATP. The protein is Light-independent protochlorophyllide reductase iron-sulfur ATP-binding protein of Chlorokybus atmophyticus (Soil alga).